A 298-amino-acid chain; its full sequence is GTP cyclohydrolase FolE2 (298 aa).

It belongs to the GTP cyclohydrolase IV family.

The enzyme catalyses GTP + H2O = 7,8-dihydroneopterin 3'-triphosphate + formate + H(+). Its pathway is cofactor biosynthesis; 7,8-dihydroneopterin triphosphate biosynthesis; 7,8-dihydroneopterin triphosphate from GTP: step 1/1. Converts GTP to 7,8-dihydroneopterin triphosphate. The polypeptide is GTP cyclohydrolase FolE2 (Pseudomonas aeruginosa (strain UCBPP-PA14)).